We begin with the raw amino-acid sequence, 249 residues long: MEFRVIIPARFDSTRLPGKALVDIAGKPMIQHVYESAIKSGAEEVVIATDDKRIRQVAEDFGAVVCMTSSDHQSGTERIAEAAVALGFEDDEIIVCLQGDEPLIPPDAIRKLAEDLDEHDNVKVASLCTPITEVDELFNPHSTKVVLNRRNYALYFSHAPIPWGRDTFSDKENLQLNGSHYRHVGIYAYRVGFLEEYLSWDACPAEKMEALEQLRILWHGGRIHMVVAKSKCPPGVDTEEDLERVRAYF.

The protein belongs to the KdsB family.

The protein resides in the cytoplasm. It carries out the reaction 3-deoxy-alpha-D-manno-oct-2-ulosonate + CTP = CMP-3-deoxy-beta-D-manno-octulosonate + diphosphate. The protein operates within nucleotide-sugar biosynthesis; CMP-3-deoxy-D-manno-octulosonate biosynthesis; CMP-3-deoxy-D-manno-octulosonate from 3-deoxy-D-manno-octulosonate and CTP: step 1/1. It functions in the pathway bacterial outer membrane biogenesis; lipopolysaccharide biosynthesis. In terms of biological role, activates KDO (a required 8-carbon sugar) for incorporation into bacterial lipopolysaccharide in Gram-negative bacteria. The polypeptide is 3-deoxy-manno-octulosonate cytidylyltransferase (Coxiella burnetii (strain CbuG_Q212) (Coxiella burnetii (strain Q212))).